We begin with the raw amino-acid sequence, 477 residues long: Ribulose bisphosphate carboxylase large chain (477 aa).

The propeptide occupies 1-2 (MS). Residue proline 3 is modified to N-acetylproline. The residue at position 14 (lysine 14) is an N6,N6,N6-trimethyllysine. 2 residues coordinate substrate: asparagine 123 and threonine 173. The active-site Proton acceptor is lysine 175. Residue lysine 177 participates in substrate binding. Positions 201, 203, and 204 each coordinate Mg(2+). Lysine 201 carries the N6-carboxylysine modification. The active-site Proton acceptor is histidine 294. Residues arginine 295, histidine 327, and serine 379 each contribute to the substrate site.

This sequence belongs to the RuBisCO large chain family. Type I subfamily. Heterohexadecamer of 8 large chains and 8 small chains; disulfide-linked. The disulfide link is formed within the large subunit homodimers. Mg(2+) is required as a cofactor. In terms of processing, the disulfide bond which can form in the large chain dimeric partners within the hexadecamer appears to be associated with oxidative stress and protein turnover.

Its subcellular location is the plastid. It is found in the chloroplast. It carries out the reaction 2 (2R)-3-phosphoglycerate + 2 H(+) = D-ribulose 1,5-bisphosphate + CO2 + H2O. The catalysed reaction is D-ribulose 1,5-bisphosphate + O2 = 2-phosphoglycolate + (2R)-3-phosphoglycerate + 2 H(+). Its function is as follows. RuBisCO catalyzes two reactions: the carboxylation of D-ribulose 1,5-bisphosphate, the primary event in carbon dioxide fixation, as well as the oxidative fragmentation of the pentose substrate in the photorespiration process. Both reactions occur simultaneously and in competition at the same active site. The polypeptide is Ribulose bisphosphate carboxylase large chain (Nicotiana tomentosiformis (Tobacco)).